The chain runs to 85 residues: MLTIRLALGGSKKRPFYHLTVTDSRNARDGSHKEQIGFFNPVARGQEIRLSVNEERVNYWLSVGAQTSERVAQLLKEHNKTKAAA.

Belongs to the bacterial ribosomal protein bS16 family.

The sequence is that of Small ribosomal subunit protein bS16 from Pseudomonas syringae pv. tomato (strain ATCC BAA-871 / DC3000).